A 382-amino-acid polypeptide reads, in one-letter code: Ribosomal RNA large subunit methyltransferase G (382 aa).

Belongs to the methyltransferase superfamily. RlmG family.

It localises to the cytoplasm. The enzyme catalyses guanosine(1835) in 23S rRNA + S-adenosyl-L-methionine = N(2)-methylguanosine(1835) in 23S rRNA + S-adenosyl-L-homocysteine + H(+). Functionally, specifically methylates the guanine in position 1835 (m2G1835) of 23S rRNA. The polypeptide is Ribosomal RNA large subunit methyltransferase G (Aliivibrio salmonicida (strain LFI1238) (Vibrio salmonicida (strain LFI1238))).